A 463-amino-acid chain; its full sequence is Bifunctional protein GlmU (463 aa).

A pyrophosphorylase region spans residues 1–233 (MSKKSTFIIL…NFEVMGINSR (233 aa)). Residues 10–13 (LAAG), Lys-24, Gln-76, 81–82 (GT), 104–106 (YGD), Gly-143, Glu-158, Asn-173, and Asn-231 each bind UDP-N-acetyl-alpha-D-glucosamine. Residue Asp-106 participates in Mg(2+) binding. Asn-231 provides a ligand contact to Mg(2+). The tract at residues 234–254 (YELFVAEQELKLRINKEHLSK) is linker. The tract at residues 255–463 (GVQIIDIYST…LRRKQMYENR (209 aa)) is N-acetyltransferase. Positions 336 and 354 each coordinate UDP-N-acetyl-alpha-D-glucosamine. His-366 acts as the Proton acceptor in catalysis. The UDP-N-acetyl-alpha-D-glucosamine site is built by Tyr-369 and Asn-380. Acetyl-CoA is bound by residues 389-390 (NY), Ala-426, and Arg-443.

The protein in the N-terminal section; belongs to the N-acetylglucosamine-1-phosphate uridyltransferase family. This sequence in the C-terminal section; belongs to the transferase hexapeptide repeat family. In terms of assembly, homotrimer. Mg(2+) is required as a cofactor.

The protein resides in the cytoplasm. The catalysed reaction is alpha-D-glucosamine 1-phosphate + acetyl-CoA = N-acetyl-alpha-D-glucosamine 1-phosphate + CoA + H(+). The enzyme catalyses N-acetyl-alpha-D-glucosamine 1-phosphate + UTP + H(+) = UDP-N-acetyl-alpha-D-glucosamine + diphosphate. Its pathway is nucleotide-sugar biosynthesis; UDP-N-acetyl-alpha-D-glucosamine biosynthesis; N-acetyl-alpha-D-glucosamine 1-phosphate from alpha-D-glucosamine 6-phosphate (route II): step 2/2. It participates in nucleotide-sugar biosynthesis; UDP-N-acetyl-alpha-D-glucosamine biosynthesis; UDP-N-acetyl-alpha-D-glucosamine from N-acetyl-alpha-D-glucosamine 1-phosphate: step 1/1. The protein operates within bacterial outer membrane biogenesis; LPS lipid A biosynthesis. In terms of biological role, catalyzes the last two sequential reactions in the de novo biosynthetic pathway for UDP-N-acetylglucosamine (UDP-GlcNAc). The C-terminal domain catalyzes the transfer of acetyl group from acetyl coenzyme A to glucosamine-1-phosphate (GlcN-1-P) to produce N-acetylglucosamine-1-phosphate (GlcNAc-1-P), which is converted into UDP-GlcNAc by the transfer of uridine 5-monophosphate (from uridine 5-triphosphate), a reaction catalyzed by the N-terminal domain. The polypeptide is Bifunctional protein GlmU (Caldicellulosiruptor saccharolyticus (strain ATCC 43494 / DSM 8903 / Tp8T 6331)).